The following is a 257-amino-acid chain: Nickel import system ATP-binding protein NikD (257 aa).

The ABC transporter domain occupies 4 to 245 (IDIQNLTIKN…HLHPYTERLI (242 aa)). Residue 37–44 (GESGAGKS) participates in ATP binding.

It belongs to the ABC transporter superfamily. The complex is composed of two ATP-binding proteins (NikD and NikE), two transmembrane proteins (NikB and NikC) and a solute-binding protein (NikA).

It localises to the cell membrane. It catalyses the reaction Ni(2+)(out) + ATP + H2O = Ni(2+)(in) + ADP + phosphate + H(+). Part of the ABC transporter complex NikABCDE (Opp2) involved in nickel import. Probably responsible for energy coupling to the transport system. This Staphylococcus aureus (strain Mu50 / ATCC 700699) protein is Nickel import system ATP-binding protein NikD.